The following is a 196-amino-acid chain: Metalloproteinase inhibitor 2 (196 aa).

An N-terminal signal peptide occupies residues 1–2 (RA). C3 contributes to the Zn(2+) binding site. Involved in metalloproteinase-binding regions lie at residues 3–6 (CSCS) and 71–72 (SA). 6 disulfide bridges follow: C3/C74, C5/C103, C15/C128, C130/C177, C135/C140, and C148/C169. In terms of domain architecture, NTR spans 3 to 128 (CSCSPVHPQQ…SLNHRYQMGC (126 aa)).

The protein belongs to the protease inhibitor I35 (TIMP) family. Interacts (via the C-terminal) with MMP2 (via the C-terminal PEX domain); the interaction inhibits the MMP2 activity. In terms of processing, the activity of TIMP2 is dependent on the presence of disulfide bonds.

It is found in the secreted. Complexes with metalloproteinases (such as collagenases) and irreversibly inactivates them by binding to their catalytic zinc cofactor. This is Metalloproteinase inhibitor 2 (TIMP2) from Cricetulus longicaudatus (Long-tailed dwarf hamster).